The chain runs to 129 residues: Small ribosomal subunit protein uS11 (129 aa).

The protein belongs to the universal ribosomal protein uS11 family. As to quaternary structure, part of the 30S ribosomal subunit. Interacts with proteins S7 and S18. Binds to IF-3.

In terms of biological role, located on the platform of the 30S subunit, it bridges several disparate RNA helices of the 16S rRNA. Forms part of the Shine-Dalgarno cleft in the 70S ribosome. The protein is Small ribosomal subunit protein uS11 of Methylobacillus flagellatus (strain ATCC 51484 / DSM 6875 / VKM B-1610 / KT).